The sequence spans 544 residues: Chaperonin GroEL 3 (544 aa).

ATP contacts are provided by residues 30 to 33 (TLGP), lysine 51, 87 to 91 (DGTTT), glycine 415, and aspartate 496.

Belongs to the chaperonin (HSP60) family. In terms of assembly, forms a cylinder of 14 subunits composed of two heptameric rings stacked back-to-back. Interacts with the co-chaperonin GroES.

It is found in the cytoplasm. It catalyses the reaction ATP + H2O + a folded polypeptide = ADP + phosphate + an unfolded polypeptide.. In terms of biological role, together with its co-chaperonin GroES, plays an essential role in assisting protein folding. The GroEL-GroES system forms a nano-cage that allows encapsulation of the non-native substrate proteins and provides a physical environment optimized to promote and accelerate protein folding. This is Chaperonin GroEL 3 from Rhizobium etli (strain ATCC 51251 / DSM 11541 / JCM 21823 / NBRC 15573 / CFN 42).